The following is a 454-amino-acid chain: MSDNDTIVAQATPPGRGGVGILRISGLKAREVAETVLGKLPKPRYADYLPFKDADGSVLDQGIALWFPGPNSFTGEDVLELQGHGGPVILDLLLKRILTIPGLRIARPGEFSERAFLNDKLDLAQAEAIADLIDASSEQAARSALNSLQGAFSARVNHLVEALTHLRIYVEAAIDFPDEEIDFLSDGKIEAQLNNVIADLDAVRAEARQGSLLREGMKVVIAGRPNAGKSSLLNALAGREAAIVTDIAGTTRDVLREHIHIDGMPLHIIDTAGLREASDEVERIGIERAWQEIEQADRVLFMVDGTTTDAVDPAEIWPEFIARLPAKLPITVVRNKADITGETLGMSEVNGHALIRLSARTGEGVDVLRNHLKQSMGFDTNMEGGFLARRRHLQALEQAAEHLQQGKAQLLGAWAGELLAEELRLAQQNLSEITGEFTSDDLLGRIFSSFCIGK.

Residues arginine 23, glutamate 80, and lysine 120 each contribute to the (6S)-5-formyl-5,6,7,8-tetrahydrofolate site. The region spanning 216 to 377 (GMKVVIAGRP…LRNHLKQSMG (162 aa)) is the TrmE-type G domain. Residue asparagine 226 coordinates K(+). GTP is bound by residues 226 to 231 (NAGKSS), 245 to 251 (TDIAGTT), 270 to 273 (DTAG), 335 to 338 (NKAD), and 358 to 360 (SAR). Position 230 (serine 230) interacts with Mg(2+). The K(+) site is built by threonine 245, isoleucine 247, and threonine 250. Threonine 251 contacts Mg(2+). Lysine 454 is a binding site for (6S)-5-formyl-5,6,7,8-tetrahydrofolate.

Belongs to the TRAFAC class TrmE-Era-EngA-EngB-Septin-like GTPase superfamily. TrmE GTPase family. Homodimer. Heterotetramer of two MnmE and two MnmG subunits. It depends on K(+) as a cofactor.

The protein resides in the cytoplasm. In terms of biological role, exhibits a very high intrinsic GTPase hydrolysis rate. Involved in the addition of a carboxymethylaminomethyl (cmnm) group at the wobble position (U34) of certain tRNAs, forming tRNA-cmnm(5)s(2)U34. The chain is tRNA modification GTPase MnmE from Escherichia coli O6:K15:H31 (strain 536 / UPEC).